Reading from the N-terminus, the 157-residue chain is Ribonuclease H (157 aa).

An RNase H type-1 domain is found at 2–145 (NAEISKIYTD…CDAIARAFAA (144 aa)). Mg(2+) contacts are provided by Asp-11, Glu-50, Asp-74, and Asp-137.

This sequence belongs to the RNase H family. Monomer. Mg(2+) is required as a cofactor.

It is found in the cytoplasm. It catalyses the reaction Endonucleolytic cleavage to 5'-phosphomonoester.. Its function is as follows. Endonuclease that specifically degrades the RNA of RNA-DNA hybrids. The sequence is that of Ribonuclease H from Cyanothece sp. (strain PCC 7425 / ATCC 29141).